A 227-amino-acid polypeptide reads, in one-letter code: Small ribosomal subunit protein uS3 (227 aa).

One can recognise a KH type-2 domain in the interval 39 to 108 (IRKFVEERYK…DVTVNVDEVK (70 aa)).

Belongs to the universal ribosomal protein uS3 family. In terms of assembly, part of the 30S ribosomal subunit. Forms a tight complex with proteins S10 and S14.

Binds the lower part of the 30S subunit head. Binds mRNA in the 70S ribosome, positioning it for translation. The polypeptide is Small ribosomal subunit protein uS3 (Persephonella marina (strain DSM 14350 / EX-H1)).